The following is a 200-amino-acid chain: Prolactin (200 aa).

Cystine bridges form between Cys-4-Cys-11, Cys-59-Cys-175, and Cys-192-Cys-200.

This sequence belongs to the somatotropin/prolactin family. Pituitary gland.

It is found in the secreted. The polypeptide is Prolactin (prl) (Protopterus aethiopicus (Marbled lungfish)).